The primary structure comprises 155 residues: Small ribosomal subunit protein uS7cz/uS7cy (155 aa).

The protein belongs to the universal ribosomal protein uS7 family. As to quaternary structure, part of the 30S ribosomal subunit.

It localises to the plastid. The protein resides in the chloroplast. One of the primary rRNA binding proteins, it binds directly to 16S rRNA where it nucleates assembly of the head domain of the 30S subunit. The polypeptide is Small ribosomal subunit protein uS7cz/uS7cy (rps7-A) (Oenothera argillicola (Appalachian evening primrose)).